The primary structure comprises 255 residues: Thiazole synthase (255 aa).

The active-site Schiff-base intermediate with DXP is Lys96. Residues Gly157, 183–184 (AG), and 205–206 (NT) each bind 1-deoxy-D-xylulose 5-phosphate.

It belongs to the ThiG family. In terms of assembly, homotetramer. Forms heterodimers with either ThiH or ThiS.

It is found in the cytoplasm. The enzyme catalyses [ThiS sulfur-carrier protein]-C-terminal-Gly-aminoethanethioate + 2-iminoacetate + 1-deoxy-D-xylulose 5-phosphate = [ThiS sulfur-carrier protein]-C-terminal Gly-Gly + 2-[(2R,5Z)-2-carboxy-4-methylthiazol-5(2H)-ylidene]ethyl phosphate + 2 H2O + H(+). Its pathway is cofactor biosynthesis; thiamine diphosphate biosynthesis. Functionally, catalyzes the rearrangement of 1-deoxy-D-xylulose 5-phosphate (DXP) to produce the thiazole phosphate moiety of thiamine. Sulfur is provided by the thiocarboxylate moiety of the carrier protein ThiS. In vitro, sulfur can be provided by H(2)S. This chain is Thiazole synthase, found in Geobacillus sp. (strain WCH70).